Reading from the N-terminus, the 149-residue chain is Small ribosomal subunit protein uS15 (149 aa).

The segment covering 1 to 14 (MGRMHTHRHGKSHS) has biased composition (basic residues). A disordered region spans residues 1–20 (MGRMHTHRHGKSHSIRPATL).

This sequence belongs to the universal ribosomal protein uS15 family. As to quaternary structure, part of the 30S ribosomal subunit.

This chain is Small ribosomal subunit protein uS15, found in Nitrosopumilus maritimus (strain SCM1).